Here is an 89-residue protein sequence, read N- to C-terminus: RNA-binding protein Hfq (89 aa).

The Sm domain occupies 9-68; the sequence is DPFLNALRRERVPVSIYLVNGIKLQGQVESFDQFVILLKNTVSQMVYKHAISTVVPARAL.

The protein belongs to the Hfq family. In terms of assembly, homohexamer.

RNA chaperone that binds small regulatory RNA (sRNAs) and mRNAs to facilitate mRNA translational regulation in response to envelope stress, environmental stress and changes in metabolite concentrations. Also binds with high specificity to tRNAs. This is RNA-binding protein Hfq from Shewanella denitrificans (strain OS217 / ATCC BAA-1090 / DSM 15013).